Reading from the N-terminus, the 248-residue chain is Granzyme C (248 aa).

The N-terminal stretch at 1–18 (MPPVLILLTLLLPLRAGA) is a signal peptide. Residues 19–20 (EE) constitute a propeptide that is removed on maturation. The Peptidase S1 domain occupies 21–246 (IIGGNEISPH…FVSWIKKTMK (226 aa)). An intrachain disulfide couples cysteine 50 to cysteine 66. Active-site charge relay system residues include histidine 65 and aspartate 109. 2 cysteine pairs are disulfide-bonded: cysteine 143/cysteine 210 and cysteine 174/cysteine 189. The active-site Charge relay system is the serine 204.

The protein belongs to the peptidase S1 family. Granzyme subfamily.

It localises to the cytolytic granule. This enzyme is probably necessary for target cell lysis in cell-mediated immune responses. This chain is Granzyme C (Gzmc), found in Mus musculus (Mouse).